Reading from the N-terminus, the 466-residue chain is 3-isopropylmalate dehydratase large subunit (466 aa).

Positions 349, 410, and 413 each coordinate [4Fe-4S] cluster.

The protein belongs to the aconitase/IPM isomerase family. LeuC type 1 subfamily. In terms of assembly, heterodimer of LeuC and LeuD. [4Fe-4S] cluster serves as cofactor.

The enzyme catalyses (2R,3S)-3-isopropylmalate = (2S)-2-isopropylmalate. It participates in amino-acid biosynthesis; L-leucine biosynthesis; L-leucine from 3-methyl-2-oxobutanoate: step 2/4. Catalyzes the isomerization between 2-isopropylmalate and 3-isopropylmalate, via the formation of 2-isopropylmaleate. In Ruthia magnifica subsp. Calyptogena magnifica, this protein is 3-isopropylmalate dehydratase large subunit.